We begin with the raw amino-acid sequence, 424 residues long: Exodeoxyribonuclease 7 large subunit (424 aa).

It belongs to the XseA family. Heterooligomer composed of large and small subunits.

It localises to the cytoplasm. The catalysed reaction is Exonucleolytic cleavage in either 5'- to 3'- or 3'- to 5'-direction to yield nucleoside 5'-phosphates.. Bidirectionally degrades single-stranded DNA into large acid-insoluble oligonucleotides, which are then degraded further into small acid-soluble oligonucleotides. In Cyanothece sp. (strain PCC 7425 / ATCC 29141), this protein is Exodeoxyribonuclease 7 large subunit.